The sequence spans 161 residues: Capsid protein (161 aa).

This sequence belongs to the virgaviridae capsid protein family.

It is found in the virion. Its function is as follows. Capsid protein self-assembles to form rod-shaped virions about 18 nm in diameter with a central canal enclosing the viral genomic RNA. The polypeptide is Capsid protein (CP) (Tobamovirus Ob).